The following is a 662-amino-acid chain: Cytochrome bo(3) ubiquinol oxidase subunit 1 (662 aa).

Topologically, residues 1–14 (MFGKLTFDAIPYHE) are extracellular. The chain crosses the membrane as a helical span at residues 15-35 (PIIMITYIAIILIALCIASTI). Over 36 to 58 (TYYKKWKYLWYEWFTTVDHKKIS) the chain is Cytoplasmic. A helical transmembrane segment spans residues 59–79 (IMYGILAFVMLFRGFVDAILM). Residues Arg-71, Asp-75, and His-98 each coordinate a ubiquinone. At 80 to 106 (RTQQVVASAGFKGFLPPHHYDQIFTAH) the chain is on the extracellular side. Heme b is bound at residue His-106. The helical transmembrane segment at 107-127 (GVIMIFFVAMPLVIGLMNLVI) threads the bilayer. At 128–145 (PLQIGARDVAFPFLNNLS) the chain is on the cytoplasmic side. A helical transmembrane segment spans residues 146–166 (FWLNVSSAVLLTLSLGIGEFA). The Extracellular segment spans residues 167–189 (QTGWLAYPPLSGIKYSSGVGVDY). Trp-170 provides a ligand contact to heme b. A helical membrane pass occupies residues 190 to 210 (WIWSLQISGVGTTLTGINFLV). Residues 211–232 (TILKMRAPGMSFFKMPVFTWTS) are Cytoplasmic-facing. The chain crosses the membrane as a helical span at residues 233-253 (LCTNILIVISFPVLTVTLVLL). Residues 254 to 277 (TLDRYFNFHFFTNDLGGNAMMYVN) lie on the Extracellular side of the membrane. Residues 278-298 (LIWIWGHPEVYILVLPVFGVF) form a helical membrane-spanning segment. His-284 lines the Cu(2+) pocket. A cross-link (1'-histidyl-3'-tyrosine (His-Tyr)) is located at residues 284-288 (HPEVY). Tyr-288 provides a ligand contact to Fe(II)-heme o. Residues 299–309 (SEVVATFSKKR) are Cytoplasmic-facing. The chain crosses the membrane as a helical span at residues 310 to 330 (LFGYVSLVWATLSITILSFIV). At 331-346 (WLHHFFTMGAGADVNT) the chain is on the extracellular side. The Cu(2+) site is built by His-333 and His-334. The helical transmembrane segment at 347-367 (FFGITTMIIAIPTGVKIFNWL) threads the bilayer. Residues 368–380 (FTIYQGRVHMHSS) lie on the Cytoplasmic side of the membrane. A helical membrane pass occupies residues 381 to 401 (ILWTLGFLVTFSIGGMTGVLL). Over 402–413 (SVPPADFVLHNS) the chain is Extracellular. 2 residues coordinate Fe(II)-heme o: His-411 and His-419. A helical transmembrane segment spans residues 414–434 (LFLVAHFHNVIIGGVVFGCFA). Residue His-421 coordinates heme b. Topologically, residues 435–456 (GINYWFPKLFGFVLNEIWGKRA) are cytoplasmic. A helical transmembrane segment spans residues 457-477 (FWFWIIGFFLAFIPLYFLGLM). Topologically, residues 478 to 493 (GMTRRLSQNIDSEFHM) are extracellular. Residues Arg-481 and Arg-482 each coordinate heme b. The helical transmembrane segment at 494–514 (LLCIAAIGACFIGIGIICQVI) threads the bilayer. Residues 515-586 (QFFISIKERR…INSINYHDIH (72 aa)) lie on the Cytoplasmic side of the membrane. The chain crosses the membrane as a helical span at residues 587–607 (MPKNTGLGFMISIFSLFFGFS). Residue Ala-608 is a topological domain, extracellular. Residues 609–629 (VWHITWLCILSFLAIIISLFI) form a helical membrane-spanning segment. At 630-662 (NSLNEDTEYTISAEEIKKIEHQYWKNIQKAGLK) the chain is on the cytoplasmic side.

Belongs to the heme-copper respiratory oxidase family. In terms of assembly, the cytochrome bo(3) ubiquinol oxidase complex is a heterooctamer of two A chains, two B chains, two C chains and two D chains. Cu(2+) serves as cofactor. The cofactor is heme b. Requires Fe(II)-heme o as cofactor.

Its subcellular location is the cell membrane. It catalyses the reaction 2 a ubiquinol + O2 + n H(+)(in) = 2 a ubiquinone + 2 H2O + n H(+)(out). Its function is as follows. Cytochrome bo(3) ubiquinol oxidase is the terminal enzyme in the aerobic respiratory chain. Catalyzes the four-electron reduction of O2 to water, using a ubiquinol as a membrane soluble electron donor for molecular oxygen reduction. Has proton pump activity across the membrane in addition to electron transfer, pumping 2 protons/electron and generating a proton motive force. All the redox centers of this enzyme complex are located within the largest subunit, subunit I. Protons are probably pumped via D- and K- channels found in this subunit. The chain is Cytochrome bo(3) ubiquinol oxidase subunit 1 (cyoB) from Buchnera aphidicola subsp. Acyrthosiphon pisum (strain APS) (Acyrthosiphon pisum symbiotic bacterium).